Consider the following 726-residue polypeptide: Tripartite terminase subunit 1 (726 aa).

Residues 189 to 217 (CMKCYEELTLTPNQGKSLRRRLHGKFCNH) form a C3H1-type zinc finger. 626–633 (YNDVFGKR) is a binding site for ATP.

Belongs to the herpesviridae TRM1 protein family. In terms of assembly, associates with TRM2 and TRM3 to form the tripartite terminase complex. Interacts with portal protein.

Its subcellular location is the host nucleus. Component of the molecular motor that translocates viral genomic DNA in empty capsid during DNA packaging. Forms a tripartite terminase complex together with TRM2 and TRM3 in the host cytoplasm. Once the complex reaches the host nucleus, it interacts with the capsid portal vertex. This portal forms a ring in which genomic DNA is translocated into the capsid. TRM1 carries an endonuclease activity that plays an important role for the cleavage of concatemeric viral DNA into unit length genomes. This is Tripartite terminase subunit 1 from Homo sapiens (Human).